A 657-amino-acid polypeptide reads, in one-letter code: Pyoverdine export ATP-binding/permease protein PvdT (657 aa).

The 240-residue stretch at 6 to 245 folds into the ABC transporter domain; the sequence is IDLRNIRKSY…LSANAGALQA (240 aa). 43-50 provides a ligand contact to ATP; it reads GASGSGKS. Transmembrane regions (helical) follow at residues 285–305, 532–552, 590–610, and 620–640; these read ALTLLGIIIGVASVVVMLAVG, LSLMLGAIAAISLLVGGIGVM, LSVVGGLAGIGVALIIGGILI, and LAAVLGAFACALVTGVIFGFM.

The protein belongs to the ABC transporter superfamily. Macrolide exporter (TC 3.A.1.122) family. As to quaternary structure, part of the tripartite efflux system PvdRT-OpmQ, which is composed of an inner membrane component with both ATPase and permease domains, PvdT, a periplasmic membrane fusion protein, PvdR, and an outer membrane component, OpmQ.

The protein localises to the cell inner membrane. Its function is as follows. Part of the tripartite efflux system PvdRT-OpmQ required for the secretion into the extracellular milieu of the siderophore pyoverdine (PVD), which is involved in iron acquisition. This subunit binds PVD and drives its secretion by hydrolyzing ATP. The system is responsible for export of newly synthesized PVD after the final steps of biosynthesis have taken place in the periplasm. It is also responsible for recycling of PVD after internalization of ferri-PVD into the periplasm by the outer-membrane receptor FpvA and release of iron from PVD, thus making PVD available for new cycles of iron uptake. This is Pyoverdine export ATP-binding/permease protein PvdT from Pseudomonas fluorescens (strain ATCC BAA-477 / NRRL B-23932 / Pf-5).